Reading from the N-terminus, the 382-residue chain is Acetyltransferase eriL (382 aa).

6 helical membrane-spanning segments follow: residues 5-25 (LQPLPGGLQVAVQACLFLGAV), 33-53 (ALLFPPVLAMSLYMLLYTTTG), 59-79 (IVTWSLITTSLLQGSDILLIN), 146-166 (TLFYFVVLDLVHTFIVLSPVF), 192-212 (LWSYMSFGYSAASVVLVALGV), and 335-355 (GYMWTFLWFVFTLPHWMDPQF).

This sequence belongs to the wax synthase family.

Its subcellular location is the membrane. The catalysed reaction is cyathatriol + acetyl-CoA = 11-O-acetylcyathatriol + CoA. It catalyses the reaction cyathin A3 + acetyl-CoA = 11-O-acetylcyathin A3 + CoA. Its pathway is secondary metabolite biosynthesis. Its function is as follows. Acetyltransferase; part of the gene cluster that mediates the biosynthesis of erinacines, cyathane-xylosides that show unique biological activities, including leishmanicidal activity, stimulating activity for nerve growth-factor synthesis, and agonistic activity toward the kappa opioid receptor. Within the pathway, eriL converts cyathatriol into 11-O-acetyl-cyathatriol. EriL is also able to acetylate cyathin A3 to produce 11-O-acetylcyathin A3. The first step of the erinacines biosynthesis pathway is catalyzed by the geranylgeranyl diphosphate (GGPP) synthase eriE via conversion of farnesyl pyrophosphate and isopentyl pyrophosphate into geranylgeranyl pyrophosphate (GGPP). GGPP is then substrate of the diterpene cyclase eriG for the production of cyatha-3,12-diene. The cytochrome P450 monooxygenase eriI then hydroxylates cyatha-3,12-diene at C-14 of the seven-membered ring to produce erinacol, which is further hydroxylated at C-15 by the cytochrome P450 monooxygenase eriC to yield cyathadiol. The cytochrome P450 monooxygenase eriA then catalyzes C-11 hydroxylation in the presence of the short chain dehydrogenase/reductase (SDR) eriH, which leads to the production of cyathatriol. The acetyltransferase eriL converts cyathatriol into 11-O-acetyl-cyathatriol. The SDR eriH catalyzes further oxidation of 11-O-acetyl-cyathatriol into 1-O-acetylcyathin A3. Finally, the glycosyl transferase eriJ tranfers xylose from UDP-xylose onto C-14 of 11-O-acetyl-cyathatriol to form eracine Q. EriJ is also able to convert 11-O-acetyl-cyathatriol to eracine Q2 by using UDP-D-glucose as cosubstrate, but at a lower rate. This chain is Acetyltransferase eriL, found in Hericium erinaceus (Lion's mane mushroom).